The sequence spans 353 residues: UPF0283 membrane protein YpsIP31758_1791 (353 aa).

Transmembrane regions (helical) follow at residues 71-91 (MVTA…VQWV), 101-121 (IALG…GSVV), and 214-234 (ESAL…FIAW).

This sequence belongs to the UPF0283 family.

It is found in the cell inner membrane. The sequence is that of UPF0283 membrane protein YpsIP31758_1791 from Yersinia pseudotuberculosis serotype O:1b (strain IP 31758).